Consider the following 77-residue polypeptide: Adipokinetic prohormone type 3 (77 aa).

Positions 1 to 22 are cleaved as a signal peptide; the sequence is MQVRAVLVLAVVALVAVATSRA. Glutamine 23 is modified (pyrrolidone carboxylic acid). Tryptophan 30 carries the tryptophan amide modification.

This sequence belongs to the AKH/HRTH/RPCH family.

The protein localises to the secreted. Its function is as follows. This hormone, released from cells in the corpora cardiaca, causes release of diglycerides from the fat body and stimulation of muscles to use these diglycerides as an energy source during energy-demanding processes. The sequence is that of Adipokinetic prohormone type 3 from Locusta migratoria (Migratory locust).